Consider the following 395-residue polypeptide: Dual specificity protein phosphatase 4 (395 aa).

Val2 carries the post-translational modification N-acetylvaline. Positions 42–160 (SGGKCLLLDC…FSSEYPEFCS (119 aa)) constitute a Rhodanese domain. The Tyrosine-protein phosphatase domain maps to 196 to 337 (GPVEILPFLY…LLQFESQVLT (142 aa)). The active-site Phosphocysteine intermediate is Cys281. Phosphoserine; by MAPK occurs at positions 387 and 392.

Belongs to the protein-tyrosine phosphatase family. Non-receptor class dual specificity subfamily. As to quaternary structure, hollow spherical complex composed of 24 subunits with pseudooctahedral symmetry, has a tetramer as the basic unit. Phosphorylation in the C-terminus by ERK1/2 inhibits proteasomal degradation and stabilizes the protein. Expressed at moderate levels in nearly all tissues and cells including brain, spleen, and testes with the higher expression in the heart and lung and lower expression in skeletal muscle and kidney. Undetectable in liver. Expressed in many areas of the brain with very strong expression in the hippocampus, piriform cortex, and the suprachiasmatic nucleus.

The protein resides in the nucleus. The enzyme catalyses O-phospho-L-tyrosyl-[protein] + H2O = L-tyrosyl-[protein] + phosphate. It carries out the reaction O-phospho-L-seryl-[protein] + H2O = L-seryl-[protein] + phosphate. The catalysed reaction is O-phospho-L-threonyl-[protein] + H2O = L-threonyl-[protein] + phosphate. In terms of biological role, regulates mitogenic signal transduction by dephosphorylating both Thr and Tyr residues on MAP kinases ERK1 and ERK2. The chain is Dual specificity protein phosphatase 4 (Dusp4) from Rattus norvegicus (Rat).